The sequence spans 283 residues: 4-diphosphocytidyl-2-C-methyl-D-erythritol kinase (283 aa).

Residue Lys-10 is part of the active site. 99–109 is a binding site for ATP; that stretch reads PMGGGLGGGSS. Residue Asp-141 is part of the active site.

It belongs to the GHMP kinase family. IspE subfamily. In terms of assembly, homodimer.

The catalysed reaction is 4-CDP-2-C-methyl-D-erythritol + ATP = 4-CDP-2-C-methyl-D-erythritol 2-phosphate + ADP + H(+). Its pathway is isoprenoid biosynthesis; isopentenyl diphosphate biosynthesis via DXP pathway; isopentenyl diphosphate from 1-deoxy-D-xylulose 5-phosphate: step 3/6. In terms of biological role, catalyzes the phosphorylation of the position 2 hydroxy group of 4-diphosphocytidyl-2C-methyl-D-erythritol. The sequence is that of 4-diphosphocytidyl-2-C-methyl-D-erythritol kinase from Escherichia coli O157:H7 (strain EC4115 / EHEC).